A 244-amino-acid polypeptide reads, in one-letter code: Proteasome subunit alpha 2 (244 aa).

It belongs to the peptidase T1A family. In terms of assembly, the 20S proteasome core is composed of 14 alpha and 14 beta subunits that assemble into four stacked heptameric rings, resulting in a barrel-shaped structure. The two inner rings, each composed of seven catalytic beta subunits, are sandwiched by two outer rings, each composed of seven alpha subunits. The catalytic chamber with the active sites is on the inside of the barrel. Has a gated structure, the ends of the cylinder being occluded by the N-termini of the alpha-subunits. Is capped at one or both ends by the proteasome regulatory ATPase, PAN.

It is found in the cytoplasm. The formation of the proteasomal ATPase PAN-20S proteasome complex, via the docking of the C-termini of PAN into the intersubunit pockets in the alpha-rings, triggers opening of the gate for substrate entry. Interconversion between the open-gate and close-gate conformations leads to a dynamic regulation of the 20S proteasome proteolysis activity. Functionally, component of the proteasome core, a large protease complex with broad specificity involved in protein degradation. The chain is Proteasome subunit alpha 2 from Haloarcula marismortui (strain ATCC 43049 / DSM 3752 / JCM 8966 / VKM B-1809) (Halobacterium marismortui).